A 236-amino-acid chain; its full sequence is Sugar fermentation stimulation protein homolog (236 aa).

Belongs to the SfsA family.

The protein is Sugar fermentation stimulation protein homolog of Proteus mirabilis (strain HI4320).